The chain runs to 318 residues: Glycine--tRNA ligase alpha subunit (318 aa).

The disordered stretch occupies residues 298 to 318 (EAGGSSPSTSRQGEAPRGESQ). The span at 300-309 (GGSSPSTSRQ) shows a compositional bias: polar residues.

The protein belongs to the class-II aminoacyl-tRNA synthetase family. Tetramer of two alpha and two beta subunits.

The protein localises to the cytoplasm. It carries out the reaction tRNA(Gly) + glycine + ATP = glycyl-tRNA(Gly) + AMP + diphosphate. This is Glycine--tRNA ligase alpha subunit from Rhodopseudomonas palustris (strain BisB18).